Reading from the N-terminus, the 305-residue chain is MQSILWFALIASVVFLVLVDLASGLNGLETLSSGADVDELTTATRLLRAAHLDRKLSEERAFISGESIGSWWTKVTEWLRVKFELIIAYIKQLRVKSNDVKDDAATNDAAHAKDDAAANKAARAKDDASRATYEAARANYEAARAYDDATRAQDVAALEAARAIEATDIAAYTGANAEYEQSMFLNGFVKTIDLHNEKNAPIMTRLNKSLDEAKKSSTFREIADGVNESKVALVVHEKQDGYLLWILHLKWAVEAKSPKDVVERILKDLGTHDVPHLQERAEQVKKAYTIFLLYVERMSRATHPK.

Positions Met-1–Gly-24 are cleaved as a signal peptide. The RxLR-dEER signature appears at Arg-45 to Arg-60. N-linked (GlcNAc...) asparagine glycans are attached at residues Asn-207 and Asn-227. Positions Leu-247–Leu-269 are w motif.

This sequence belongs to the RxLR effector family. Interacts with host A.thaliana At1G14340.

Its subcellular location is the secreted. The protein resides in the host cell membrane. Its function is as follows. Secreted effector that confers enhanced plant susceptibility during both compatible and incompatible interactions between the pathogen and its host. Promotes the sexual reproduction of the pathogen in the plant host. This chain is RxLR effector protein 17, found in Hyaloperonospora arabidopsidis (strain Emoy2) (Downy mildew agent).